A 233-amino-acid chain; its full sequence is Large ribosomal subunit protein uL1 (233 aa).

The protein belongs to the universal ribosomal protein uL1 family. Part of the 50S ribosomal subunit.

In terms of biological role, binds directly to 23S rRNA. The L1 stalk is quite mobile in the ribosome, and is involved in E site tRNA release. Its function is as follows. Protein L1 is also a translational repressor protein, it controls the translation of the L11 operon by binding to its mRNA. The polypeptide is Large ribosomal subunit protein uL1 (Geotalea daltonii (strain DSM 22248 / JCM 15807 / FRC-32) (Geobacter daltonii)).